A 257-amino-acid polypeptide reads, in one-letter code: ECF RNA polymerase sigma factor SigE (257 aa).

Residues 87–153 are sigma-70 factor domain-2; sequence LVRQHADRVY…FLDMVRRRAR (67 aa). The short motif at 111–114 is the Polymerase core binding element; that stretch reads DLTQ. Positions 186–236 are sigma-70 factor domain-4; sequence LQAALASLPPEFRAAVVLCDIEGLSYEEIGATLGVKLGTVRSRIHRGRQAL. The segment at residues 211 to 230 is a DNA-binding region (H-T-H motif); that stretch reads YEEIGATLGVKLGTVRSRIH.

It belongs to the sigma-70 factor family. ECF subfamily. As to quaternary structure, interacts transiently with the RNA polymerase catalytic core formed by RpoA, RpoB, RpoC and RpoZ (2 alpha, 1 beta, 1 beta' and 1 omega subunit) to form the RNA polymerase holoenzyme that can initiate transcription. Interacts (via sigma-70 factor domain 4) with cognate anti-sigma-E factor RseA under reducing conditions, which stops the sigma factor from functioning.

Sigma factors are initiation factors that promote the attachment of RNA polymerase to specific initiation sites and are then released. Extracytoplasmic function (ECF) sigma factors are held in an inactive form by an anti-sigma factor until released. Responds to surface stress (H(2)O(2)). The protein is ECF RNA polymerase sigma factor SigE (sigE) of Mycobacterium tuberculosis (strain ATCC 35801 / TMC 107 / Erdman).